We begin with the raw amino-acid sequence, 363 residues long: Fructose-bisphosphate aldolase C (363 aa).

The substrate site is built by arginine 56 and lysine 147. Catalysis depends on lysine 230, which acts as the Schiff-base intermediate with dihydroxyacetone-P.

Belongs to the class I fructose-bisphosphate aldolase family. As to quaternary structure, homotetramer. As to expression, expressed in brain but not in liver or muscle.

The enzyme catalyses beta-D-fructose 1,6-bisphosphate = D-glyceraldehyde 3-phosphate + dihydroxyacetone phosphate. Its pathway is carbohydrate degradation; glycolysis; D-glyceraldehyde 3-phosphate and glycerone phosphate from D-glucose: step 4/4. The sequence is that of Fructose-bisphosphate aldolase C (aldoc) from Carassius auratus (Goldfish).